We begin with the raw amino-acid sequence, 500 residues long: Cytochrome P450 71B38 (500 aa).

A helical transmembrane segment spans residues Ile3–Pro23. Cys441 contributes to the heme binding site.

Belongs to the cytochrome P450 family. Heme is required as a cofactor.

It localises to the membrane. This is Cytochrome P450 71B38 (CYP71B38) from Arabidopsis thaliana (Mouse-ear cress).